Here is a 325-residue protein sequence, read N- to C-terminus: Beta-ketoacyl-[acyl-carrier-protein] synthase III (325 aa).

Residues Cys-112 and His-250 contribute to the active site. An ACP-binding region spans residues 251-255 (QANIR). Asn-280 is an active-site residue.

It belongs to the thiolase-like superfamily. FabH family. In terms of assembly, homodimer.

It localises to the cytoplasm. The enzyme catalyses malonyl-[ACP] + acetyl-CoA + H(+) = 3-oxobutanoyl-[ACP] + CO2 + CoA. The protein operates within lipid metabolism; fatty acid biosynthesis. Catalyzes the condensation reaction of fatty acid synthesis by the addition to an acyl acceptor of two carbons from malonyl-ACP. Catalyzes the first condensation reaction which initiates fatty acid synthesis and may therefore play a role in governing the total rate of fatty acid production. Possesses both acetoacetyl-ACP synthase and acetyl transacylase activities. Its substrate specificity determines the biosynthesis of branched-chain and/or straight-chain of fatty acids. The sequence is that of Beta-ketoacyl-[acyl-carrier-protein] synthase III from Clostridium acetobutylicum (strain ATCC 824 / DSM 792 / JCM 1419 / IAM 19013 / LMG 5710 / NBRC 13948 / NRRL B-527 / VKM B-1787 / 2291 / W).